Here is a 145-residue protein sequence, read N- to C-terminus: AP-2 complex subunit sigma (145 aa).

It belongs to the adaptor complexes small subunit family. As to quaternary structure, adaptor protein complex 2 (AP-2) is a heterotetramer composed of two large adaptins (alpha-type subunit apl3 and beta-type subunit apl1), a medium chain (mu-type subunit apm4) and a small adaptin (sigma-type subunit aps2).

The protein resides in the cell membrane. It localises to the membrane. Its subcellular location is the coated pit. Component of the adaptor complexes which link clathrin to receptors in coated vesicles. Clathrin-associated protein complexes are believed to interact with the cytoplasmic tails of membrane proteins, leading to their selection and concentration. This Emericella nidulans (strain FGSC A4 / ATCC 38163 / CBS 112.46 / NRRL 194 / M139) (Aspergillus nidulans) protein is AP-2 complex subunit sigma (aps2).